We begin with the raw amino-acid sequence, 429 residues long: Probable M18 family aminopeptidase 2 (429 aa).

The Zn(2+) site is built by H82, H156, and H401.

The protein belongs to the peptidase M18 family. Requires Zn(2+) as cofactor.

The chain is Probable M18 family aminopeptidase 2 from Azotobacter vinelandii (strain DJ / ATCC BAA-1303).